The primary structure comprises 85 residues: Beta-toxin Ct6 (85 aa).

An N-terminal signal peptide occupies residues M1 to A18. The LCN-type CS-alpha/beta domain maps to K19–G84. 4 disulfides stabilise this stretch: C30-C83, C34-C59, C43-C64, and C47-C66. Residue C83 is modified to Cysteine amide.

It belongs to the long (4 C-C) scorpion toxin superfamily. Sodium channel inhibitor family. Beta subfamily. Expressed by the venom gland.

Its subcellular location is the secreted. Beta toxins bind voltage-independently at site-4 of sodium channels (Nav) and shift the voltage of activation toward more negative potentials thereby affecting sodium channel activation and promoting spontaneous and repetitive firing. This chain is Beta-toxin Ct6, found in Centruroides tecomanus (Scorpion).